We begin with the raw amino-acid sequence, 2694 residues long: MDVKERRPYCSLTKSRREKERRYTGSSGDSEDCRVPTQKSYSSSETLKAFDHDSSRLLYGGHVKEMVHREADEYSRQGQNFNLRQLGICEPATRRGLAFCAEMGMPSSLSSPSVTEHSHSQPPSPNLHDNQSSILSNATTQAVQDSDSEEEYTAVLYRPVTQPAPSHSCNEQPSNQHQQGQSTLPPVPPPHKQQPSVTALNHNSLSSRRNVSPAPPAALPAELQTTPESVPLQDSWVLGSNVPLESRHFLFKTGTGTTPLFSTATPGYTMATGAVYSPPTRPLPRNTLSRSAFKFKKSSKYCSWRCTALSAMAVSILLSVLLCYCIAMHLFGLNWQLQETEGYAFENGQVKSDSTATNAVTALSTENKVYFQENNTIDTGEVDVGRRAVQDVPPGTFWRTQLFIDQPQSLKFNISVQRGALVGVYGRKGLPPTHTQYDFVELLDGSRLIAKEKRGLVEVEGAARKARSVNVHEAEFIRFLDSGTWHLAFYNDGKNAEQVSYNTIIIDTLTECPHNCHGNGDCRTGTCHCFPGFLGPDCSRAACPVLCSGNGQYSRGRCLCYSGWKGTECDVPSNQCIDIHCSGHGICIMGTCACNTGYKGDNCEEVDCLDPSCSSHGVCIHGECHCNPGWGGNNCEILKTMCPDQCSGHGTYQTESGTCTCDTNWTGPDCSIEVCAVDCGSHGVCIGGSCRCEEGWTGSVCDLKACHPRCTEHGTCKDGKCECHQGWTGEHCTVEGCPGLCNSNGRCTLDQNGWHCVCQPGWRGAGCDVAMETLCADGKDNEGDGLVDCMDPDCCLQSSCQTQPFCRGSPDPIDIISQNQPASPQQAAQSFYQQISFLTGPESTHVINGENPFNRSLVSIIRGQVLTADGTPLIGVNVSFVHYPDHGYTITRQDGMFDILANGGASLTLSFERAPFLTQFRTVWIPWNVFYVMDTLVMKKEENDIPSCDLSGFIRPSPLIVATPLSTFFRSSPENGPIIPETQVLQEETAIPGSDLNLMYLSSRAAGYRPVLKVTMTQATIPFNLMKVHLMVAVVGRLFQKWFPAEPNLSYTFIWDKTDAYNQRVYGLSEAVVSVGFEYESCLDLILWEKRTAILQGYELDASNMGGWTLDKHHVLDVQNGILYKGNGENVFVSQQPPVISTIMGNGRRRSISCPSCNGQADGNKLLAPVALACGSDGSLFVGDFNYIRRIFPSGNVTSVMELSNNPAHRYYLATDPMTGQLYVSDTNSRRIFRPKALTGTKELLQNAEVVAGTGEQCLPFDEARCGDGGKATEALLLGPKGIAVDKNGFIYFVDGTMIRKVDRNGIISTLLGSNDLTSARPLTCDNSMHIGQVRLEWPTDLAINPMDNSIYVLDNNVVLQITENRQVRIVAGRPMHCQVPGIEYTMGKRAIQTTLEGATAISLSYSGVLYIAETDEKKINRIRQVSTDGEISHLAGAPSDCDCKNDANCDCYQTGDGYAKDARLNAPSSLVVSPDGTLYVADLGNIRIRAIRHNRPPQGSSGLFEVASPASQELYVFDSNGTHQYTMSLVTGDYKYNFSYSNEDDVTAVTDSSGNTLRVRRDPNRMPVRIVAPDNQVIWLTIGTNGGLKTLTAQGQELVLFTYHGNSGLLATKSIQIGWTTFYDYDSEGRLTNVTFPTGVITSLIGEMDRALTVDIETSGRDDDVSITTNLSSIDSFYTLVQDQLRNSYQVGYDNSMRVIYANGMDSHFQTEPHILAGASNPTVARRNMTLPGENGQNLVEWRFRKEQNRGKVVVFGRKLRVNGRNLLSVDYDRSLRTEKIYDDHRKFLLKIVYDASGHPTLWVPSSKLMSVNLTYSSTGQVTSLQRGPTTERVEYDSQGRIVSRTFADAKIWSYTYLDKSMVLLLHSQRQYIFDYDLQDRLSAITMPSVARHTMQTIRSVGYYRNIYNPPESNASVTVDYSEDGQLLRVAHLGTGRRVLYKYRRQNKLSEILYDSTRVSFTYDETAGVLKTVNLQSEGFICSIRYRQIGPLVDRQIFRFSEDGMVNARFDYTYDNSFRVTSMQGVINETPLPIDLYQFDDISGKVEQFGKFGVIYYDINQIISTAVMTYTKHFDVHGRIKEIQYEIFRSLMYWITIQYDNMGRVTKREIKIGPFANTTKYGYEYDVDGQLQTVYLNEKMMWRYNYDLNGNLHLLNPGNSARLTPLRYDLRDRITRLGDVQYRMDEDGFLRQRGAEIFEYNSKGLLVRVHSKASGWTIQYRYDGLGRRLASRNSLGQHLQFFYADLNYPTRITHVYNHSSSEITSLYYDLQGHLFAMEISSGEEFYIACDNTGTPLAVFSSNGLLLKQVQYTAYGEIYFDSNPDFQLVIGFHGGLYDPLTRLLHFGERDYDIQAGRWTTPDISTWTRVGKDPAPFNLYMFRNNNPISKIHEVKEYVTDVNIWLVTFGFHLHNVIPGFPIPKFDLTQPSLEMRKSQLWDDLPSISGVQQEVMRQAKAFLSFERMPEIQLSRRRSSREKPWLWFATVKSLIGKGVMLAITSKGQVATNALNIANEDCIKVATVLNNAFYLEDLHFTVEGRDTHYFIKTSLPESDLGALRLTSGRKSLENGVNVTVSQSTTVVNGRTRRFADVELQYGALALHVRYGMTLDEEKARVLEQARQRALSSAWAREQQRVRDGEEGVRLWTEGEKRQLLSSGKVLGYDGYYVLSVEQYPELADSANNVQFLRQSEIGKR.

Disordered stretches follow at residues M1–E45, P106–S132, and T161–T198. The 306-residue stretch at M1 to C306 folds into the Teneurin N-terminal domain. At M1–M312 the chain is on the cytoplasmic side. The span at P163–L184 shows a compositional bias: polar residues. The helical transmembrane segment at A313–L333 threads the bilayer. The Extracellular portion of the chain corresponds to N334 to R2694. N-linked (GlcNAc...) asparagine glycans are attached at residues N374 and N413. EGF-like domains lie at T508–S539, R540–D570, P572–E604, E605–E636, L638–S671, I672–L703, K704–T733, and V734–D768. Intrachain disulfides connect C512–C522, C516–C527, C529–C538, C547–C558, C560–C569, C576–C587, C581–C592, C594–C603, C608–C619, C613–C624, C626–C635, C646–C659, C661–C670, C675–C685, C679–C690, C692–C701, C706–C716, C710–C721, C723–C732, C737–C747, C741–C756, and C758–C767. N664 is a glycosylation site (N-linked (GlcNAc...) asparagine). 3 N-linked (GlcNAc...) asparagine glycosylation sites follow: N854, N877, and N1048. 5 NHL repeats span residues L1166–F1192, S1194–L1238, A1264–I1308, C1325–N1365, and C1452–N1495. N-linked (GlcNAc...) asparagine glycosylation occurs at N1196. The stretch at F1505–H1524 is one YD 1 repeat. 2 N-linked (GlcNAc...) asparagine glycosylation sites follow: N1521 and N1538. YD repeat units follow at residues Y1541–R1561, Y1604–F1623, and Y1624–I1646. Residues N1634, N1671, N1729, and N1814 are each glycosylated (N-linked (GlcNAc...) asparagine). YD repeat units follow at residues Y1817–E1836, Y1858–D1876, Y1877–Q1897, Y1904–D1921, Y1922–K1943, Y1944–S1961, Y1964–S1984, Y1987–V2007, Y2015–P2034, F2040–Y2057, Y2058–I2084, Y2086–Q2099, Y2100–G2123, Y2126–N2146, Y2147–L2167, Y2169–G2189, Y2201–Y2221, and Y2223–F2243. N-linked (GlcNAc...) asparagine glycosylation occurs at N1915. N-linked (GlcNAc...) asparagine glycosylation is present at N2118. N-linked (GlcNAc...) asparagine glycosylation is present at N2258. The stretch at Y2269 to V2310 is one YD 23 repeat. N2571 carries an N-linked (GlcNAc...) asparagine glycan.

Belongs to the tenascin family. Teneurin subfamily. Homodimer; disulfide-linked; to mediate homophilic cell adhesion. In terms of tissue distribution, expressed by retinal ganglion cells and their presynaptic amacrine and postsynaptic tectal cell targets.

The protein resides in the cell membrane. It localises to the cell projection. Its subcellular location is the axon. Functionally, involved in neural development by regulating the establishment of proper connectivity within the nervous system. Acts in both pre- and postsynaptic neurons in the hippocampus to control the assembly of a precise topographic projection: required in both CA1 and subicular neurons for the precise targeting of proximal CA1 axons to distal subiculum, probably by promoting homophilic cell adhesion. Required by retinal ganglion cells for acquisition of their correct morphological and functional connectivity, thereby playing a key role in the development of the visual pathway. In Danio rerio (Zebrafish), this protein is Teneurin-3 (tenm3).